The chain runs to 275 residues: Transcriptional coregulator psa-3 (275 aa).

One can recognise an MEIS N-terminal domain in the interval 91 to 161; the sequence is TDDIKRLFQS…RRTVCHEALV (71 aa). Positions 239–275 are disordered; that stretch reads QLPPNFLKPSNEKSPEKSEEEKSQKPSSSPKSPSLSD. A compositionally biased stretch (basic and acidic residues) spans 248–262; sequence SNEKSPEKSEEEKSQ. Residues 263–275 are compositionally biased toward low complexity; sequence KPSSSPKSPSLSD.

As to quaternary structure, interacts with homeobox protein ceh-20; the interaction is direct, facilitates nuclear localization of ceh-20 and may stabilize interaction of a ceh-20-nob-1 complex with DNA.

The protein localises to the nucleus. Its function is as follows. Probable transcription coregulator. Required for asymmetric cell divisions of the T hypodermal cells, and cell fate determination, in concert with homeobox proteins nob-1 and ceh-20. Acts downstream of the Wnt signaling pathway, and of ceh-20 and nob-1. This is Transcriptional coregulator psa-3 from Caenorhabditis elegans.